The sequence spans 319 residues: EDEAPKMCGVTQNWESYEPIKKASQSNLTPAHQRYIELVIVADHGMFTKYNGDSDKIREWVRQMVNTVDEIYSYMYIDVALAGLEIWSNEDLINVQPAAPHTLDSFGKWRERDLLHRIHHDNAMLLTAIDFDGPTIGLAYVGTMCKPKGSTGVVQDHSTINLRVAVTMAHEIGHNLGIHHDTGSCSCGGYSCIMSPVISHEPSKYFSDCSYTQCWDFIMNQKPQCILNKPLRTDTVSTPVSGNELLEAGEECDCGSPGNPCCDAATCKLRQGAQCAEGLCCDQCRFMKKGTVCRIARGDDMDDYCNGISAGCPRNPFHA.

The propeptide occupies 1–28 (EDEAPKMCGVTQNWESYEPIKKASQSNL). The region spanning 34 to 230 (RYIELVIVAD…QKPQCILNKP (197 aa)) is the Peptidase M12B domain. 2 residues coordinate Ca(2+): Glu37 and Asp121. Cystine bridges form between Cys145–Cys225, Cys185–Cys209, and Cys187–Cys192. Residue His170 coordinates Zn(2+). Residue Glu171 is part of the active site. Residues His174 and His180 each coordinate Zn(2+). Residues Cys225 and Asn228 each contribute to the Ca(2+) site. Positions 231–246 (LRTDTVSTPVSGNELL) are excised as a propeptide. Residues 238-319 (TPVSGNELLE…AGCPRNPFHA (82 aa)) form the Disintegrin domain. 6 cysteine pairs are disulfide-bonded: Cys252–Cys267, Cys254–Cys262, Cys261–Cys284, Cys275–Cys281, Cys280–Cys305, and Cys293–Cys312. Positions 297 to 299 (RGD) match the Cell attachment site motif.

It belongs to the venom metalloproteinase (M12B) family. P-II subfamily. P-IIa sub-subfamily. As to quaternary structure, monomer. Zn(2+) serves as cofactor. Expressed by the venom gland.

Its subcellular location is the secreted. Its activity is regulated as follows. Excess of calcium ions significantly suppress the autoproteolysis of the enzyme. In terms of biological role, metalloproteinase that impairs hemostasis in the envenomed animal. Shows autoproteolysis dependent on pH and temperature. Does not show hemorrhagic activity. Inhibits platelet aggregation induced by ADP (IC(50) is 200 nM), collagen (IC(50) is 500 nM), thrombin and epinephrin (IC(50) is 300 nM). Does not inhibit aggregation induced by ristocetin. Functionally, inhibits platelet aggregation induced by ADP (IC(50) is 100 nM), collagen (IC(50) is 500 nM), thrombin and epinephrin (IC(50) is 300 nM). Does not inhibit aggregation induced by ristocetin. Significantly inhibits angiogenesis both in vivo and in vitro. In Gloydius brevicauda (Korean slamosa snake), this protein is Zinc metalloproteinase/disintegrin.